The following is a 178-amino-acid chain: Putative metal-dependent hydrolase GK0616 (178 aa).

Residues His-68, His-161, and His-165 each coordinate Zn(2+).

This sequence belongs to the metal hydrolase YfiT family. In terms of assembly, homodimer. It depends on Zn(2+) as a cofactor.

The protein resides in the cytoplasm. In terms of biological role, possible metal-dependent hydrolase. The polypeptide is Putative metal-dependent hydrolase GK0616 (Geobacillus kaustophilus (strain HTA426)).